The sequence spans 210 residues: Hydrogenase expression/formation protein HupD (210 aa).

3 residues coordinate Ni(2+): E22, D68, and H99.

Belongs to the peptidase A31 family.

In terms of biological role, not known. Could be involved in the processing of hydrogenase. In Rhodobacter capsulatus (Rhodopseudomonas capsulata), this protein is Hydrogenase expression/formation protein HupD (hupD).